A 417-amino-acid polypeptide reads, in one-letter code: Sterile alpha motif domain-containing protein 14 (417 aa).

The disordered stretch occupies residues 36-302 (QLLAKGRRHR…GGPRQETKCS (267 aa)). Residues 40 to 49 (KGRRHRPSRS) show a composition bias toward basic residues. Phosphoserine is present on residues serine 84 and serine 108. A compositionally biased stretch (low complexity) spans 138–153 (SGSPPRSAPSSDSSPS). Positions 159 to 173 (PRAEPHSEDDSRDAS) are enriched in basic and acidic residues. Phosphoserine is present on residues serine 173 and serine 179. 2 stretches are compositionally biased toward low complexity: residues 244-260 (SGKGSASSGSTTSPTCS) and 276-289 (STLSDDSTPPSSSP). Serine 279 is modified (phosphoserine). Position 283 is a phosphothreonine (threonine 283). One can recognise an SAM domain in the interval 326–389 (WTSQQVGQWL…KRKLKELAAA (64 aa)). Residues 375–416 (DRALVKRKLKELAAAAEKERKAQEKTAKQREKLRRRENDAKK) adopt a coiled-coil conformation. Positions 390 to 417 (AEKERKAQEKTAKQREKLRRRENDAKKS) are disordered.

The polypeptide is Sterile alpha motif domain-containing protein 14 (Samd14) (Mus musculus (Mouse)).